Consider the following 398-residue polypeptide: tRNA(Ile)-lysidine synthase (398 aa).

Residue 25–30 participates in ATP binding; the sequence is SGGVDS.

This sequence belongs to the tRNA(Ile)-lysidine synthase family.

It is found in the cytoplasm. The catalysed reaction is cytidine(34) in tRNA(Ile2) + L-lysine + ATP = lysidine(34) in tRNA(Ile2) + AMP + diphosphate + H(+). Functionally, ligates lysine onto the cytidine present at position 34 of the AUA codon-specific tRNA(Ile) that contains the anticodon CAU, in an ATP-dependent manner. Cytidine is converted to lysidine, thus changing the amino acid specificity of the tRNA from methionine to isoleucine. This Francisella tularensis subsp. tularensis (strain SCHU S4 / Schu 4) protein is tRNA(Ile)-lysidine synthase.